A 29-amino-acid polypeptide reads, in one-letter code: Cyclotide psyleio A (29 aa).

A cross-link (cyclopeptide (Gly-Asp)) is located at residues 1-29 (GLPICGETCFTGTCNTPGCSCTYPICTRD). 3 disulfide bridges follow: Cys-5-Cys-19, Cys-9-Cys-21, and Cys-14-Cys-26.

In terms of processing, this is a cyclic peptide.

In terms of biological role, probably participates in a plant defense mechanism. The protein is Cyclotide psyleio A of Psychotria brachyceras.